The following is a 399-amino-acid chain: Exodeoxyribonuclease 7 large subunit (399 aa).

It belongs to the XseA family. As to quaternary structure, heterooligomer composed of large and small subunits.

It is found in the cytoplasm. It catalyses the reaction Exonucleolytic cleavage in either 5'- to 3'- or 3'- to 5'-direction to yield nucleoside 5'-phosphates.. Its function is as follows. Bidirectionally degrades single-stranded DNA into large acid-insoluble oligonucleotides, which are then degraded further into small acid-soluble oligonucleotides. The chain is Exodeoxyribonuclease 7 large subunit from Clostridium acetobutylicum (strain ATCC 824 / DSM 792 / JCM 1419 / IAM 19013 / LMG 5710 / NBRC 13948 / NRRL B-527 / VKM B-1787 / 2291 / W).